The primary structure comprises 488 residues: Erythromycin resistance ATP-binding protein MsrA (488 aa).

The ABC transporter 1 domain occupies 6–199 (IKFNQINHKL…NQYEQEQLEQ (194 aa)). Position 38 to 45 (38 to 45 (GGNGTGKT)) interacts with ATP. The Q-linker, rich in Glu and hydrophilic AA stretch occupies residues 200–298 (QRKYEQYISE…KIYDIHNNYP (99 aa)). Residues 211-255 (QRLSQASKAKRNQAQQMAQASSKQKNKSIAPDRLSASKEKGTVEK) are disordered. A compositionally biased stretch (low complexity) spans 222 to 233 (NQAQQMAQASSK). Basic and acidic residues predominate over residues 245–255 (SASKEKGTVEK). Residues 299 to 487 (IIAQNLTLVK…ELTGQSIHDI (189 aa)) enclose the ABC transporter 2 domain. ATP is bound at residue 331 to 338 (GANGVGKT).

It belongs to the ABC transporter superfamily.

In terms of biological role, confers resistance to 14-membered ring macrolides (like erythromycin) and to B streptogramins, by acting as an ATP-dependent efflux pump. The sequence is that of Erythromycin resistance ATP-binding protein MsrA (msrA) from Staphylococcus epidermidis.